The chain runs to 492 residues: Glycylpeptide N-tetradecanoyltransferase 2 (492 aa).

The disordered stretch occupies residues 1–77; sequence MAEDSESAAS…SASDSQEIKN (77 aa). Residues 15–32 are compositionally biased toward acidic residues; the sequence is ELDDQDTCGIDGDNEEEN. The span at 46-57 shows a compositional bias: basic residues; it reads KKKKKKQKRKKE. Positions 61–72 are enriched in polar residues; the sequence is SGGTKSDSASDS. Residues histidine 111, tryptophan 116, leucine 244, valine 246, serine 252, arginine 254, valine 255, and alanine 256 each coordinate tetradecanoyl-CoA.

It belongs to the NMT family.

The protein localises to the cytoplasm. The protein resides in the membrane. It catalyses the reaction N-terminal glycyl-[protein] + tetradecanoyl-CoA = N-tetradecanoylglycyl-[protein] + CoA + H(+). It carries out the reaction N-terminal glycyl-L-lysyl-[protein] + tetradecanoyl-CoA = N-terminal glycyl-(N(6)-tetradecanoyl)-L-lysyl-[protein] + CoA + H(+). Its function is as follows. Adds a myristoyl group to the N-terminal glycine residue of certain cellular and viral proteins. Also able to mediate N-terminal lysine myristoylation of proteins. In Danio rerio (Zebrafish), this protein is Glycylpeptide N-tetradecanoyltransferase 2.